The sequence spans 221 residues: Leucyl/phenylalanyl-tRNA--protein transferase (221 aa).

This sequence belongs to the L/F-transferase family.

The protein localises to the cytoplasm. The catalysed reaction is N-terminal L-lysyl-[protein] + L-leucyl-tRNA(Leu) = N-terminal L-leucyl-L-lysyl-[protein] + tRNA(Leu) + H(+). The enzyme catalyses N-terminal L-arginyl-[protein] + L-leucyl-tRNA(Leu) = N-terminal L-leucyl-L-arginyl-[protein] + tRNA(Leu) + H(+). It catalyses the reaction L-phenylalanyl-tRNA(Phe) + an N-terminal L-alpha-aminoacyl-[protein] = an N-terminal L-phenylalanyl-L-alpha-aminoacyl-[protein] + tRNA(Phe). Functionally, functions in the N-end rule pathway of protein degradation where it conjugates Leu, Phe and, less efficiently, Met from aminoacyl-tRNAs to the N-termini of proteins containing an N-terminal arginine or lysine. This Phenylobacterium zucineum (strain HLK1) protein is Leucyl/phenylalanyl-tRNA--protein transferase.